Reading from the N-terminus, the 363-residue chain is 3-dehydroquinate synthase (363 aa).

NAD(+)-binding positions include 107–111 (GVIGD), 131–132 (TT), K144, and K153. 3 residues coordinate Zn(2+): E186, H251, and H268.

Belongs to the sugar phosphate cyclases superfamily. Dehydroquinate synthase family. The cofactor is Co(2+). Zn(2+) is required as a cofactor. It depends on NAD(+) as a cofactor.

It is found in the cytoplasm. It carries out the reaction 7-phospho-2-dehydro-3-deoxy-D-arabino-heptonate = 3-dehydroquinate + phosphate. The protein operates within metabolic intermediate biosynthesis; chorismate biosynthesis; chorismate from D-erythrose 4-phosphate and phosphoenolpyruvate: step 2/7. Functionally, catalyzes the conversion of 3-deoxy-D-arabino-heptulosonate 7-phosphate (DAHP) to dehydroquinate (DHQ). This Nostoc punctiforme (strain ATCC 29133 / PCC 73102) protein is 3-dehydroquinate synthase.